Here is an 805-residue protein sequence, read N- to C-terminus: BLOC-2 complex member HPS6 (805 aa).

Positions 743-805 (GAQGRPSGPV…LGAADVGVHL (63 aa)) are disordered. Residues 764–773 (GTPPPTPPRG) show a composition bias toward pro residues.

As to quaternary structure, component of the biogenesis of lysosome-related organelles complex-2 (or BLOC2) composed of HPS3, HPS5 and HPS6. Interacts with HPS5 and HPS3. Interacts with biogenesis of lysosome-related organelles complex-1 (BLOC1). Interacts with dynein intermediate chain. Interacts with AP-3 complex. Interacts with DCTN1. As to expression, widely expressed, with lowest expression in skeletal muscle.

The protein localises to the microsome membrane. It is found in the cytoplasm. The protein resides in the cytosol. Its subcellular location is the early endosome membrane. It localises to the lysosome membrane. May regulate the synthesis and function of lysosomes and of highly specialized organelles, such as melanosomes and platelet dense granules. Acts as a cargo adapter for the dynein-dynactin motor complex to mediate the transport of lysosomes from the cell periphery to the perinuclear region. Facilitates retrograde lysosomal trafficking by linking the motor complex to lysosomes, and perinuclear positioning of lysosomes is crucial for the delivery of endocytic cargos to lysosomes, for lysosome maturation and functioning. In Mus musculus (Mouse), this protein is BLOC-2 complex member HPS6 (Hps6).